Reading from the N-terminus, the 259-residue chain is Phosphoadenosine 5'-phosphosulfate reductase (259 aa).

The active-site Nucleophile; cysteine thiosulfonate intermediate is Cys-244.

The protein belongs to the PAPS reductase family. CysH subfamily.

It localises to the cytoplasm. It catalyses the reaction [thioredoxin]-disulfide + sulfite + adenosine 3',5'-bisphosphate + 2 H(+) = [thioredoxin]-dithiol + 3'-phosphoadenylyl sulfate. Its pathway is sulfur metabolism; hydrogen sulfide biosynthesis; sulfite from sulfate: step 3/3. In terms of biological role, catalyzes the formation of sulfite from phosphoadenosine 5'-phosphosulfate (PAPS) using thioredoxin as an electron donor. The protein is Phosphoadenosine 5'-phosphosulfate reductase of Vibrio parahaemolyticus serotype O3:K6 (strain RIMD 2210633).